We begin with the raw amino-acid sequence, 145 residues long: UPF0763 protein WS1752 (145 aa).

The protein belongs to the UPF0763 family.

This chain is UPF0763 protein WS1752, found in Wolinella succinogenes (strain ATCC 29543 / DSM 1740 / CCUG 13145 / JCM 31913 / LMG 7466 / NCTC 11488 / FDC 602W) (Vibrio succinogenes).